A 130-amino-acid polypeptide reads, in one-letter code: Small ribosomal subunit protein uS17m (130 aa).

Belongs to the universal ribosomal protein uS17 family. In terms of assembly, component of the mitochondrial ribosome small subunit (28S) which comprises a 12S rRNA and about 30 distinct proteins.

The protein resides in the mitochondrion. In Bos taurus (Bovine), this protein is Small ribosomal subunit protein uS17m (MRPS17).